A 109-amino-acid chain; its full sequence is Mitochondrial pyruvate carrier 1 (109 aa).

Alanine 2 carries the post-translational modification N-acetylalanine. Residues 2-20 (AGALVRKAADYVRSKDFRD) are Mitochondrial matrix-facing. Residues 21 to 41 (YLMSTHFWGPVANWGLPIAAI) form a helical membrane-spanning segment. Topologically, residues 42–52 (NDMKKSPEIIS) are mitochondrial intermembrane. The helical transmembrane segment at 53-71 (GRMTFALCCYSLTFMRFAY) threads the bilayer. The residue at position 72 (lysine 72) is an N6-acetyllysine. Residues 72 to 109 (KVQPRNWLLFACHATNEVAQLIQGGRLIKHEMTKTASA) are Mitochondrial matrix-facing.

The protein belongs to the mitochondrial pyruvate carrier (MPC) (TC 2.A.105) family. In terms of assembly, homodimer. Forms heterodimer with MPC2. The heterodimer is the more stable and dominant form.

Its subcellular location is the mitochondrion inner membrane. The catalysed reaction is pyruvate(out) + H(+)(out) = pyruvate(in) + H(+)(in). In terms of biological role, mediates the uptake of pyruvate into mitochondria. This chain is Mitochondrial pyruvate carrier 1 (MPC1), found in Homo sapiens (Human).